The primary structure comprises 288 residues: DNA repair protein RecO (288 aa).

Belongs to the RecO family.

In terms of biological role, involved in DNA repair and RecF pathway recombination. The chain is DNA repair protein RecO from Trichodesmium erythraeum (strain IMS101).